Here is a 164-residue protein sequence, read N- to C-terminus: MNIDNDLRRIALQEQQLQFERFDLDTAWKLGVTLRRMAAERKLGCVIDITLFSMQVFYAALDGATPDNPNWVRRKRNTVFRLFKSSYATGLSLLKQQTNLQAKLGLADAEFAAHGGSFPIVVKGTGCIGAVTVSGLPQRDDHNLVVEALAELLGANHDELKLES.

The protein belongs to the UPF0303 family.

This Sinorhizobium medicae (strain WSM419) (Ensifer medicae) protein is UPF0303 protein Smed_2872.